We begin with the raw amino-acid sequence, 258 residues long: 14-3-3-like protein F (258 aa).

This sequence belongs to the 14-3-3 family.

This chain is 14-3-3-like protein F, found in Nicotiana tabacum (Common tobacco).